The primary structure comprises 285 residues: Protease HtpX homolog (285 aa).

The next 2 helical transmembrane spans lie at 7-27 (TAMLMAAITALFIVIGGMIGG) and 30-50 (GMTIALLIALGMNFFSYWFSD). Position 131 (His131) interacts with Zn(2+). Residue Glu132 is part of the active site. His135 contacts Zn(2+). The next 2 helical transmembrane spans lie at 146-166 (ISATMAGAISALANFAMFFGG) and 177-197 (IAGIAVALLAPIAGALIQMAI). Glu202 serves as a coordination point for Zn(2+).

It belongs to the peptidase M48B family. Requires Zn(2+) as cofactor.

It is found in the cell inner membrane. The chain is Protease HtpX homolog from Burkholderia thailandensis (strain ATCC 700388 / DSM 13276 / CCUG 48851 / CIP 106301 / E264).